Reading from the N-terminus, the 451-residue chain is tRNA(Ile)-lysidine synthase (451 aa).

21 to 26 (SGGLDS) provides a ligand contact to ATP.

This sequence belongs to the tRNA(Ile)-lysidine synthase family.

The protein localises to the cytoplasm. The catalysed reaction is cytidine(34) in tRNA(Ile2) + L-lysine + ATP = lysidine(34) in tRNA(Ile2) + AMP + diphosphate + H(+). In terms of biological role, ligates lysine onto the cytidine present at position 34 of the AUA codon-specific tRNA(Ile) that contains the anticodon CAU, in an ATP-dependent manner. Cytidine is converted to lysidine, thus changing the amino acid specificity of the tRNA from methionine to isoleucine. The protein is tRNA(Ile)-lysidine synthase of Yersinia pseudotuberculosis serotype O:1b (strain IP 31758).